The sequence spans 248 residues: Proteasome subunit alpha (248 aa).

Belongs to the peptidase T1A family. As to quaternary structure, the 20S proteasome core is composed of 14 alpha and 14 beta subunits that assemble into four stacked heptameric rings, resulting in a barrel-shaped structure. The two inner rings, each composed of seven catalytic beta subunits, are sandwiched by two outer rings, each composed of seven alpha subunits. The catalytic chamber with the active sites is on the inside of the barrel. Has a gated structure, the ends of the cylinder being occluded by the N-termini of the alpha-subunits. Is capped by the proteasome-associated ATPase, ARC.

Its subcellular location is the cytoplasm. It functions in the pathway protein degradation; proteasomal Pup-dependent pathway. The formation of the proteasomal ATPase ARC-20S proteasome complex, likely via the docking of the C-termini of ARC into the intersubunit pockets in the alpha-rings, may trigger opening of the gate for substrate entry. Interconversion between the open-gate and close-gate conformations leads to a dynamic regulation of the 20S proteasome proteolysis activity. In terms of biological role, component of the proteasome core, a large protease complex with broad specificity involved in protein degradation. This Mycobacterium tuberculosis (strain ATCC 25177 / H37Ra) protein is Proteasome subunit alpha.